Here is a 192-residue protein sequence, read N- to C-terminus: Glycerol-3-phosphate acyltransferase (192 aa).

5 consecutive transmembrane segments (helical) span residues 3–23 (ALFL…EVIA), 51–71 (YGVL…LIAV), 80–100 (VLTF…FFGF), 112–132 (VVFA…LGIF), and 149–169 (AFLF…AIVI).

Belongs to the PlsY family. As to quaternary structure, probably interacts with PlsX.

The protein resides in the cell inner membrane. The catalysed reaction is an acyl phosphate + sn-glycerol 3-phosphate = a 1-acyl-sn-glycero-3-phosphate + phosphate. It functions in the pathway lipid metabolism; phospholipid metabolism. Catalyzes the transfer of an acyl group from acyl-phosphate (acyl-PO(4)) to glycerol-3-phosphate (G3P) to form lysophosphatidic acid (LPA). This enzyme utilizes acyl-phosphate as fatty acyl donor, but not acyl-CoA or acyl-ACP. The sequence is that of Glycerol-3-phosphate acyltransferase from Aquifex aeolicus (strain VF5).